Consider the following 246-residue polypeptide: 14-3-3 protein beta/alpha (246 aa).

Met-1 bears the N-acetylmethionine mark. Thr-2 is subject to N-acetylthreonine; in 14-3-3 protein beta/alpha, N-terminally processed. Phosphothreonine is present on Thr-2. Lys-5 is modified (N6-acetyllysine). Lys-51 is subject to N6-acetyllysine; alternate. A Glycyl lysine isopeptide (Lys-Gly) (interchain with G-Cter in SUMO2); alternate cross-link involves residue Lys-51. Ser-60 is subject to Phosphoserine. Lys-70 is subject to N6-acetyllysine. Residues Tyr-84 and Tyr-106 each carry the 3'-nitrotyrosine modification. An N6-acetyllysine modification is found at Lys-117. Residues Ser-186 and Ser-232 each carry the phosphoserine modification.

Belongs to the 14-3-3 family. Homodimer. Interacts with SAMSN1 and PRKCE. Interacts with AKAP13. Interacts with SSH1 and TORC2/CRTC2. Interacts with ABL1; the interaction results in cytoplasmic location of ABL1 and inhibition of cABL-mediated apoptosis. Interacts with ROR2 (dimer); the interaction results in phosphorylation of YWHAB on tyrosine residues. Interacts with GAB2. Interacts with YAP1 (phosphorylated form). Interacts with the phosphorylated (by AKT1) form of SRPK2. Interacts with PKA-phosphorylated AANAT. Interacts with MYO1C. Interacts with SIRT2. Interacts with the 'Thr-369' phosphorylated form of DAPK2. Interacts with PI4KB, TBC1D22A and TBC1D22B. Interacts with the 'Ser-1134' and 'Ser-1161' phosphorylated form of SOS1. Interacts (via phosphorylated form) with YWHAB; this interaction occurs in a protein kinase AKT1-dependent manner. Interacts with SLITRK1. Interacts with SYNPO2 (phosphorylated form); YWHAB competes with ACTN2 for interaction with SYNPO2. Interacts with RIPOR2 (via phosphorylated form); this interaction occurs in a chemokine-dependent manner and does not compete for binding of RIPOR2 with RHOA nor blocks inhibition of RIPOR2-mediated RHOA activity. Interacts with MARK2 and MARK3. Interacts with TESK1; the interaction is dependent on the phosphorylation of TESK1 'Ser-439' and inhibits TESK1 kinase activity. Interacts with MEFV. Interacts with HDAC4. Interacts with ADAM22 (via C-terminus). The alpha, brain-specific form differs from the beta form in being phosphorylated. Phosphorylated on Ser-60 by protein kinase C delta type catalytic subunit in a sphingosine-dependent fashion. Post-translationally, isoform Short contains a N-acetylmethionine at position 1.

Its subcellular location is the cytoplasm. The protein localises to the melanosome. Adapter protein implicated in the regulation of a large spectrum of both general and specialized signaling pathways. Binds to a large number of partners, usually by recognition of a phosphoserine or phosphothreonine motif. Binding generally results in the modulation of the activity of the binding partner. Negative regulator of osteogenesis. Blocks the nuclear translocation of the phosphorylated form (by AKT1) of SRPK2 and antagonizes its stimulatory effect on cyclin D1 expression resulting in blockage of neuronal apoptosis elicited by SRPK2. Negative regulator of signaling cascades that mediate activation of MAP kinases via AKAP13. In Rattus norvegicus (Rat), this protein is 14-3-3 protein beta/alpha (Ywhab).